Here is a 145-residue protein sequence, read N- to C-terminus: Aminoglycoside N(6')-acetyltransferase type 1 (145 aa).

The N-acetyltransferase domain maps to methionine 1 to cysteine 145. Substrate-binding residues include tryptophan 22, histidine 25, tyrosine 66, and glutamate 79. Acetyl-CoA contacts are provided by residues isoleucine 81–valine 83 and glutamine 89–lysine 94. Residue aspartate 115 coordinates substrate. Acetyl-CoA is bound at residue asparagine 120. Glutamate 136 contributes to the substrate binding site.

Homodimer.

It carries out the reaction kanamycin B + acetyl-CoA = N(6')-acetylkanamycin B + CoA + H(+). Its function is as follows. Catalyzes the transfer of an acetyl group from acetyl-CoA to the 6'-amino group of aminoglycoside molecules conferring resistance to antibiotics containing the purpurosamine ring including amikacin, tobramycin, dibekacin and ribostamycin. Able to acetylate eukaryotic histone proteins. The chain is Aminoglycoside N(6')-acetyltransferase type 1 from Salmonella enteritidis.